The following is a 192-amino-acid chain: NOP protein chaperone 1 (192 aa).

Over residues 1–26 the composition is skewed to low complexity; that stretch reads MEVSGESHSGPSCSSSSRDGSGVSVS. Residues 1–39 are disordered; that stretch reads MEVSGESHSGPSCSSSSRDGSGVSVSKELLMAGSGGRGG. Phosphoserine occurs at positions 34 and 66. A disordered region spans residues 118-192; that stretch reads FEMNQSHSKE…SENKEKQENK (75 aa). The span at 129 to 152 shows a compositional bias: acidic residues; the sequence is DSSEENSQDSSEESSESEDEDDST. The span at 164 to 177 shows a compositional bias: basic and acidic residues; it reads KLPHSEDGKGKIEV. Position 180 is a phosphoserine (Ser-180).

Interacts with NOP58, RUVBL1 and RUVBL2; the interactions are direct and NOPCHAP1 bridges the association of NOP58 with RUVBL1:RUVBL2 even in absence of snoRNAs. The interactions with RUVBL1 and RUVBL2 are disrupted upon ATP binding.

It localises to the nucleus. Its function is as follows. Client-loading PAQosome/R2TP complex cofactor that selects NOP58 to promote box C/D small nucleolar ribonucleoprotein (snoRNP) assembly. Acts as a bridge between NOP58 and the R2TP complex via RUVBL1:RUVBL2. The sequence is that of NOP protein chaperone 1 (NOPCHAP1) from Bos taurus (Bovine).